A 123-amino-acid polypeptide reads, in one-letter code: Periplasmic [Fe] hydrogenase small subunit (123 aa).

A signal peptide (tat-type signal) is located at residues 1-34 (MQIASITRRGFLKVACVTTGAALIGIRMTGKAVA). The tract at residues 103 to 123 (TTAGKLPNPRASEFEGPYPYE) is disordered.

Heterodimer of a large and a small subunit. Predicted to be exported by the Tat system. The position of the signal peptide cleavage has been experimentally proven.

It localises to the periplasm. The enzyme catalyses H2 + 2 oxidized [2Fe-2S]-[ferredoxin] = 2 reduced [2Fe-2S]-[ferredoxin] + 2 H(+). In terms of biological role, may be involved in hydrogen uptake for the reduction of sulfate to hydrogen sulfide in an electron transport chain. Cytochrome c3 is likely to be the physiological electron carrier for the enzyme. This is Periplasmic [Fe] hydrogenase small subunit (hydB) from Nitratidesulfovibrio vulgaris (strain ATCC 29579 / DSM 644 / CCUG 34227 / NCIMB 8303 / VKM B-1760 / Hildenborough) (Desulfovibrio vulgaris).